We begin with the raw amino-acid sequence, 458 residues long: UDP-N-acetylmuramoylalanine--D-glutamate ligase (458 aa).

ATP is bound at residue 124-130 (GSDGKTT).

This sequence belongs to the MurCDEF family.

It localises to the cytoplasm. It catalyses the reaction UDP-N-acetyl-alpha-D-muramoyl-L-alanine + D-glutamate + ATP = UDP-N-acetyl-alpha-D-muramoyl-L-alanyl-D-glutamate + ADP + phosphate + H(+). Its pathway is cell wall biogenesis; peptidoglycan biosynthesis. Its function is as follows. Cell wall formation. Catalyzes the addition of glutamate to the nucleotide precursor UDP-N-acetylmuramoyl-L-alanine (UMA). In Clostridium botulinum (strain ATCC 19397 / Type A), this protein is UDP-N-acetylmuramoylalanine--D-glutamate ligase.